Here is a 412-residue protein sequence, read N- to C-terminus: Phosphoglycerate kinase (412 aa).

Substrate contacts are provided by residues 22–24 (DFN), R37, 60–63 (HLGK), R120, and R172. ATP-binding positions include K223, G310, E341, and 368–371 (GGDS).

Belongs to the phosphoglycerate kinase family. In terms of assembly, monomer.

Its subcellular location is the cytoplasm. It carries out the reaction (2R)-3-phosphoglycerate + ATP = (2R)-3-phospho-glyceroyl phosphate + ADP. It functions in the pathway carbohydrate degradation; glycolysis; pyruvate from D-glyceraldehyde 3-phosphate: step 2/5. The polypeptide is Phosphoglycerate kinase (Spiroplasma citri).